A 207-amino-acid chain; its full sequence is Cytochrome c biogenesis ATP-binding export protein CcmA (207 aa).

In terms of domain architecture, ABC transporter spans 4-207; it reads LEVRELLCER…RISLTQTRAV (204 aa). An ATP-binding site is contributed by 36-43; sequence GSNGAGKT.

Belongs to the ABC transporter superfamily. CcmA exporter (TC 3.A.1.107) family. In terms of assembly, the complex is composed of two ATP-binding proteins (CcmA) and two transmembrane proteins (CcmB).

Its subcellular location is the cell inner membrane. It catalyses the reaction heme b(in) + ATP + H2O = heme b(out) + ADP + phosphate + H(+). Its function is as follows. Part of the ABC transporter complex CcmAB involved in the biogenesis of c-type cytochromes; once thought to export heme, this seems not to be the case, but its exact role is uncertain. Responsible for energy coupling to the transport system. The polypeptide is Cytochrome c biogenesis ATP-binding export protein CcmA (Shigella dysenteriae serotype 1 (strain Sd197)).